A 197-amino-acid chain; its full sequence is Holliday junction branch migration complex subunit RuvA (197 aa).

The domain I stretch occupies residues 1-64 (MYEYIKGKYI…EDFIGIYGFL (64 aa)). The segment at 65–143 (TKDELSMFKL…IDISEEDDEQ (79 aa)) is domain II. The interval 144 to 148 (IINKV) is flexible linker. Positions 149–197 (TDDKKVLEAVAALVTLGYSEKEASKVINLCDKNNSLEQIIKEALKHLMK) are domain III.

The protein belongs to the RuvA family. In terms of assembly, homotetramer. Forms an RuvA(8)-RuvB(12)-Holliday junction (HJ) complex. HJ DNA is sandwiched between 2 RuvA tetramers; dsDNA enters through RuvA and exits via RuvB. An RuvB hexamer assembles on each DNA strand where it exits the tetramer. Each RuvB hexamer is contacted by two RuvA subunits (via domain III) on 2 adjacent RuvB subunits; this complex drives branch migration. In the full resolvosome a probable DNA-RuvA(4)-RuvB(12)-RuvC(2) complex forms which resolves the HJ.

Its subcellular location is the cytoplasm. Functionally, the RuvA-RuvB-RuvC complex processes Holliday junction (HJ) DNA during genetic recombination and DNA repair, while the RuvA-RuvB complex plays an important role in the rescue of blocked DNA replication forks via replication fork reversal (RFR). RuvA specifically binds to HJ cruciform DNA, conferring on it an open structure. The RuvB hexamer acts as an ATP-dependent pump, pulling dsDNA into and through the RuvAB complex. HJ branch migration allows RuvC to scan DNA until it finds its consensus sequence, where it cleaves and resolves the cruciform DNA. This is Holliday junction branch migration complex subunit RuvA from Clostridium botulinum (strain Loch Maree / Type A3).